The primary structure comprises 536 residues: Indolin-2-one monooxygenase (536 aa).

A helical membrane pass occupies residues 18-34 (GTATHALLLGVLIFLVI). Cys-480 is a binding site for heme.

Belongs to the cytochrome P450 family. Heme is required as a cofactor.

The protein localises to the membrane. It catalyses the reaction indolin-2-one + reduced [NADPH--hemoprotein reductase] + O2 = 3-hydroxyindolin-2-one + oxidized [NADPH--hemoprotein reductase] + H2O + H(+). It functions in the pathway secondary metabolite biosynthesis; 2,4-dihydroxy-1,4-benzoxazin-3-one biosynthesis; 2,4-dihydroxy-1,4-benzoxazin-3-one from indoleglycerol phosphate: step 3/5. Its function is as follows. Catalyzes the conversion of indolin-2-one to 3-hydroxyindolin-2-one. The chain is Indolin-2-one monooxygenase (CYP71C2) from Zea mays (Maize).